The sequence spans 256 residues: UPF0246 protein Sbal_1048 (256 aa).

This sequence belongs to the UPF0246 family.

The chain is UPF0246 protein Sbal_1048 from Shewanella baltica (strain OS155 / ATCC BAA-1091).